The sequence spans 341 residues: MKSIGITAIGMYVPERVVHNHEFESRMGIEDGWIESRSGIRERRFSAPGEFASHIGAKAVQDMLARDPDALKDVDLVIYATCTPDAMFPSTAALVAGQVGLTGVGAYDLSTACSGFVYALSMARGMILGGSAKNVLVLGGEVLSKALDQDDRDTAILFGDGCGCAVVGEVPAGYGFQDFVLGADSAGGPALYISNLADQFPDGQIMRGVPTMNGREVFKFAVRVLGDSGTQALQKSGLSNADVDWLIPHQANIRIIEAATQRFGIPMEKTVINLDRYGNTSAGTVPLALYEAVNDGRIQGGQQLLMVVFGGGLSWAACTMKWWGGRPSLHAQVAQPAEVPA.

Active-site residues include cysteine 113 and histidine 249. The ACP-binding stretch occupies residues 250–254 (QANIR). Residue asparagine 279 is part of the active site.

It belongs to the thiolase-like superfamily. FabH family. In terms of assembly, homodimer.

It is found in the cytoplasm. The enzyme catalyses malonyl-[ACP] + acetyl-CoA + H(+) = 3-oxobutanoyl-[ACP] + CO2 + CoA. Its pathway is lipid metabolism; fatty acid biosynthesis. Catalyzes the condensation reaction of fatty acid synthesis by the addition to an acyl acceptor of two carbons from malonyl-ACP. Catalyzes the first condensation reaction which initiates fatty acid synthesis and may therefore play a role in governing the total rate of fatty acid production. Possesses both acetoacetyl-ACP synthase and acetyl transacylase activities. Its substrate specificity determines the biosynthesis of branched-chain and/or straight-chain of fatty acids. In Deinococcus radiodurans (strain ATCC 13939 / DSM 20539 / JCM 16871 / CCUG 27074 / LMG 4051 / NBRC 15346 / NCIMB 9279 / VKM B-1422 / R1), this protein is Beta-ketoacyl-[acyl-carrier-protein] synthase III 1.